A 248-amino-acid chain; its full sequence is 4-hydroxy-tetrahydrodipicolinate reductase (248 aa).

NAD(+) contacts are provided by residues 8 to 13 (GAKGRV), D34, 76 to 78 (GTT), and 103 to 106 (APNF). The Proton donor/acceptor role is filled by H133. H134 serves as a coordination point for (S)-2,3,4,5-tetrahydrodipicolinate. K137 (proton donor) is an active-site residue. Residue 143 to 144 (GT) participates in (S)-2,3,4,5-tetrahydrodipicolinate binding.

Belongs to the DapB family.

The protein localises to the cytoplasm. The catalysed reaction is (S)-2,3,4,5-tetrahydrodipicolinate + NAD(+) + H2O = (2S,4S)-4-hydroxy-2,3,4,5-tetrahydrodipicolinate + NADH + H(+). The enzyme catalyses (S)-2,3,4,5-tetrahydrodipicolinate + NADP(+) + H2O = (2S,4S)-4-hydroxy-2,3,4,5-tetrahydrodipicolinate + NADPH + H(+). It participates in amino-acid biosynthesis; L-lysine biosynthesis via DAP pathway; (S)-tetrahydrodipicolinate from L-aspartate: step 4/4. Catalyzes the conversion of 4-hydroxy-tetrahydrodipicolinate (HTPA) to tetrahydrodipicolinate. In Corynebacterium urealyticum (strain ATCC 43042 / DSM 7109), this protein is 4-hydroxy-tetrahydrodipicolinate reductase.